The chain runs to 235 residues: Small ribosomal subunit protein eS4 (235 aa).

The region spanning Val38–Asn99 is the S4 RNA-binding domain.

Belongs to the eukaryotic ribosomal protein eS4 family.

In Thermoplasma volcanium (strain ATCC 51530 / DSM 4299 / JCM 9571 / NBRC 15438 / GSS1), this protein is Small ribosomal subunit protein eS4 (rps4e).